The sequence spans 158 residues: Glutathione peroxidase homolog BsaA (158 aa).

Residue Thr-36 is part of the active site.

Belongs to the glutathione peroxidase family.

The sequence is that of Glutathione peroxidase homolog BsaA (bsaA) from Staphylococcus epidermidis (strain ATCC 35984 / DSM 28319 / BCRC 17069 / CCUG 31568 / BM 3577 / RP62A).